We begin with the raw amino-acid sequence, 205 residues long: Probable calcium-binding protein CML41 (205 aa).

The interval 26-55 is disordered; it reads SFQNRRRSPKSNSSSTLNSPRSNSDDNNNI. Residues 35–54 are compositionally biased toward low complexity; sequence KSNSSSTLNSPRSNSDDNNN. EF-hand domains are found at residues 60–95, 96–131, 137–173, and 174–205; these read ASKE…VGEY, ISHE…RDLY, DGDG…LGES, and RTYG…MMTV. Residues aspartate 73, aspartate 75, aspartate 77, lysine 79, glutamate 84, aspartate 109, aspartate 111, aspartate 113, serine 115, and aspartate 120 each contribute to the Ca(2+) site. Ca(2+) contacts are provided by aspartate 187, aspartate 189, asparagine 191, and glutamate 198.

Its function is as follows. Potential calcium sensor. In Arabidopsis thaliana (Mouse-ear cress), this protein is Probable calcium-binding protein CML41 (CML41).